Here is a 149-residue protein sequence, read N- to C-terminus: Oligosaccharyltransferase complex subunit OSTC (149 aa).

The Cytoplasmic portion of the chain corresponds to 1–32 (METLYRVPFLVLECPNLKLKKPPWLHMPSAMT). A helical transmembrane segment spans residues 33–53 (VYALVVVSYFLITGGIIYDVI). Over 54 to 83 (VEPPSVGSMTDEHGHQRPVAFLAYRVNGQY) the chain is Extracellular. A helical transmembrane segment spans residues 84-104 (IMEGLASSFLFTMGGLGFIIL). Over 105–117 (DRSNAPNIPKLNR) the chain is Cytoplasmic. Residues 118-138 (FLLLFIGFVCVLLSFFMARVF) traverse the membrane as a helical segment. The Extracellular segment spans residues 139 to 149 (MRMKLPGYLMG).

This sequence belongs to the OSTC family. As to quaternary structure, component of STT3A-containing oligosaccharyl transferase (OST-A) complex. STT3A-containing complex assembly occurs through the formation of 3 subcomplexes. Subcomplex 1 contains RPN1 and TMEM258, subcomplex 2 contains the STT3A-specific subunits STT3A, DC2/OSTC, and KCP2 as well as the core subunit OST4, and subcomplex 3 contains RPN2, DAD1, and OST48. The OST-A complex can form stable complexes with the Sec61 complex or with both the Sec61 and TRAP complexes. Interacts with PSEN1 and NCSTN; indicative for an association with the gamma-secretase complex.

It is found in the endoplasmic reticulum. It localises to the membrane. It functions in the pathway protein modification; protein glycosylation. Its function is as follows. Subunit of STT3A-containing oligosaccharyl transferase (OST-A) complex that catalyzes the initial transfer of a defined glycan (Glc(3)Man(9)GlcNAc(2) in eukaryotes) from the lipid carrier dolichol-pyrophosphate to an asparagine residue within an Asn-X-Ser/Thr consensus motif in nascent polypeptide chains, the first step in protein N-glycosylation. N-glycosylation occurs cotranslationally and the complex associates with the Sec61 complex at the channel-forming translocon complex that mediates protein translocation across the endoplasmic reticulum (ER). Within the OST-A complex, acts as an adapter that anchors the OST-A complex to the Sec61 complex. May be involved in N-glycosylation of APP (amyloid-beta precursor protein). Can modulate gamma-secretase cleavage of APP by enhancing endoprotelysis of PSEN1. This chain is Oligosaccharyltransferase complex subunit OSTC, found in Homo sapiens (Human).